The chain runs to 307 residues: Methionyl-tRNA formyltransferase (307 aa).

108-111 serves as a coordination point for (6S)-5,6,7,8-tetrahydrofolate; that stretch reads SLLP.

Belongs to the Fmt family.

It catalyses the reaction L-methionyl-tRNA(fMet) + (6R)-10-formyltetrahydrofolate = N-formyl-L-methionyl-tRNA(fMet) + (6S)-5,6,7,8-tetrahydrofolate + H(+). Functionally, attaches a formyl group to the free amino group of methionyl-tRNA(fMet). The formyl group appears to play a dual role in the initiator identity of N-formylmethionyl-tRNA by promoting its recognition by IF2 and preventing the misappropriation of this tRNA by the elongation apparatus. This is Methionyl-tRNA formyltransferase from Stenotrophomonas maltophilia (strain R551-3).